We begin with the raw amino-acid sequence, 44 residues long: Antimicrobial peptide 1b (44 aa).

In terms of domain architecture, Chitin-binding type-1 spans 1–42; that stretch reads AQKCGEQGRGAKCPNCLCCGRYGFCGSTPDYCGVGCQSQCRG. 5 cysteine pairs are disulfide-bonded: Cys-4–Cys-19, Cys-13–Cys-25, Cys-16–Cys-43, Cys-18–Cys-32, and Cys-36–Cys-40.

Contains 5 disulfide bonds.

Binds chitin. Has antifungal activity against F.oxysporum 16/10 (IC(50)=4.1 uM) and B.sorokiniana 6/10 (IC(50)=2.7 uM). Inhibits germination of fungal spores. This Leymus arenarius (Lyme grass) protein is Antimicrobial peptide 1b.